The sequence spans 311 residues: tRNA dimethylallyltransferase (311 aa).

An ATP-binding site is contributed by 11–18; sequence GPTAVGKT. A substrate-binding site is contributed by 13 to 18; sequence TAVGKT. Residues 36 to 39 are interaction with substrate tRNA; that stretch reads DSMQ.

This sequence belongs to the IPP transferase family. Monomer. Requires Mg(2+) as cofactor.

The catalysed reaction is adenosine(37) in tRNA + dimethylallyl diphosphate = N(6)-dimethylallyladenosine(37) in tRNA + diphosphate. In terms of biological role, catalyzes the transfer of a dimethylallyl group onto the adenine at position 37 in tRNAs that read codons beginning with uridine, leading to the formation of N6-(dimethylallyl)adenosine (i(6)A). The polypeptide is tRNA dimethylallyltransferase (Clostridioides difficile (strain 630) (Peptoclostridium difficile)).